Consider the following 202-residue polypeptide: Ribonuclease HII (202 aa).

The RNase H type-2 domain maps to 12–201 (LLIAGVDEAG…VRQLKLFIPE (190 aa)). Residues aspartate 18, glutamate 19, and aspartate 110 each contribute to the a divalent metal cation site.

This sequence belongs to the RNase HII family. Requires Mn(2+) as cofactor. The cofactor is Mg(2+).

The protein resides in the cytoplasm. It catalyses the reaction Endonucleolytic cleavage to 5'-phosphomonoester.. Endonuclease that specifically degrades the RNA of RNA-DNA hybrids. In Coxiella burnetii (strain CbuK_Q154) (Coxiella burnetii (strain Q154)), this protein is Ribonuclease HII.